The primary structure comprises 226 residues: MKKLSKRMQAVTKLIDKNKLYPIQEAFELIKKTAITKFVSSVDIAVSLNLDTTKAEQQLRGAIAFPFSIGKSIRILAITDDEKKASEAGADFVGGLDKIEAIKNGWLDFDLIITSPKFMGALGKLGKLLGTRGLMPNPKTETVTDDVVSAIKAYKKGKKEYRTDSFGNIHLSLGKTDTKTEHLVANAMALIDLIKSKRPSTVKGTYIKNIALTTTMGPSLKVKLPD.

It belongs to the universal ribosomal protein uL1 family. In terms of assembly, part of the 50S ribosomal subunit.

Its function is as follows. Binds directly to 23S rRNA. The L1 stalk is quite mobile in the ribosome, and is involved in E site tRNA release. In terms of biological role, protein L1 is also a translational repressor protein, it controls the translation of the L11 operon by binding to its mRNA. This chain is Large ribosomal subunit protein uL1, found in Mycoplasma genitalium (strain ATCC 33530 / DSM 19775 / NCTC 10195 / G37) (Mycoplasmoides genitalium).